The primary structure comprises 205 residues: MSRYRGPRLKIVRKLGDLPGLTSKINKNLQLAEQNKGKKSTKTKLSQYGIRLQEKQKLKYNYGVTEKQLLLYIRKARTIKGSTGQMLLQYLEMRLDNTVFRLGLAPTIAGARQLVNHGHIMVNNRIVTIPSYKCKPKDILSIRNNNKSRNLVLNNLASPSVSKIPNHLLLKKDTLTATVNGIVERKSIPLEINELLVVEYYSRQT.

The S4 RNA-binding domain maps to 93–156 (MRLDNTVFRL…KSRNLVLNNL (64 aa)).

This sequence belongs to the universal ribosomal protein uS4 family. As to quaternary structure, part of the 30S ribosomal subunit. Contacts protein S5. The interaction surface between S4 and S5 is involved in control of translational fidelity.

It localises to the plastid. It is found in the chloroplast. Its function is as follows. One of the primary rRNA binding proteins, it binds directly to 16S rRNA where it nucleates assembly of the body of the 30S subunit. Functionally, with S5 and S12 plays an important role in translational accuracy. This Mesostigma viride (Green alga) protein is Small ribosomal subunit protein uS4c (rps4).